The primary structure comprises 103 residues: Large ribosomal subunit protein bL21 (103 aa).

The protein belongs to the bacterial ribosomal protein bL21 family. In terms of assembly, part of the 50S ribosomal subunit. Contacts protein L20.

This protein binds to 23S rRNA in the presence of protein L20. This chain is Large ribosomal subunit protein bL21, found in Pectobacterium carotovorum subsp. carotovorum (strain PC1).